A 206-amino-acid chain; its full sequence is Sclerostin domain-containing protein 1 (206 aa).

A signal peptide spans 1–23; that stretch reads MLPPAIHLSLIPLLCILMRNCLA. A disordered region spans residues 42 to 62; the sequence is AHPSSNSTLNQARNGGRHFSS. The span at 44–62 shows a compositional bias: polar residues; the sequence is PSSNSTLNQARNGGRHFSS. N-linked (GlcNAc...) asparagine glycosylation occurs at N47. 4 disulfide bridges follow: C75–C133, C89–C147, C100–C163, and C104–C165. In terms of domain architecture, CTCK spans 75–170; that stretch reads CRELRSTKYI…TACKCKRYTR (96 aa). N173 carries N-linked (GlcNAc...) asparagine glycosylation. The tract at residues 176-206 is disordered; it reads SHNFESVSPAKPAQHHRERKRASKSSKHSLS. Over residues 188–206 the composition is skewed to basic residues; it reads AQHHRERKRASKSSKHSLS.

Belongs to the sclerostin family. Interacts with BMP2, BMP4, BMP6 and BMP7 with high affinity. Highly expressed in kidney at renal collecting ducts level and weakly in brain.

It is found in the secreted. In terms of biological role, may be involved in the onset of endometrial receptivity for implantation/sensitization for the decidual cell reaction. Enhances Wnt signaling and inhibits TGF-beta signaling. Directly antagonizes activity of BMP2, BMP4, BMP6 and BMP7 in a dose-dependent manner. The sequence is that of Sclerostin domain-containing protein 1 (Sostdc1) from Mus musculus (Mouse).